The primary structure comprises 688 residues: Elongation factor G (688 aa).

A tr-type G domain is found at 8 to 282 (EKTRNIGIMA…AIIDYLPSPM (275 aa)). GTP-binding positions include 17 to 24 (AHIDAGKT), 81 to 85 (DTPGH), and 135 to 138 (NKMD).

This sequence belongs to the TRAFAC class translation factor GTPase superfamily. Classic translation factor GTPase family. EF-G/EF-2 subfamily.

It localises to the cytoplasm. Catalyzes the GTP-dependent ribosomal translocation step during translation elongation. During this step, the ribosome changes from the pre-translocational (PRE) to the post-translocational (POST) state as the newly formed A-site-bound peptidyl-tRNA and P-site-bound deacylated tRNA move to the P and E sites, respectively. Catalyzes the coordinated movement of the two tRNA molecules, the mRNA and conformational changes in the ribosome. The sequence is that of Elongation factor G from Phytoplasma mali (strain AT).